A 350-amino-acid chain; its full sequence is Very-long-chain 3-oxoacyl-CoA reductase (350 aa).

The chain crosses the membrane as a helical span at residues 20-40 (ALLFSLLFGVFKLTTFTLRFA). The NADP(+) site is built by Val66, Asp120, Asn147, Tyr221, Lys225, Val254, and Ser256. The active-site Proton donor is the Tyr221. The active-site Lowers pKa of active site Tyr is Lys225.

This sequence belongs to the short-chain dehydrogenases/reductases (SDR) family.

The protein localises to the endoplasmic reticulum membrane. The enzyme catalyses a very-long-chain (3R)-3-hydroxyacyl-CoA + NADP(+) = a very-long-chain 3-oxoacyl-CoA + NADPH + H(+). It participates in lipid metabolism; fatty acid biosynthesis. Its function is as follows. Component of the microsomal membrane bound fatty acid elongation system, which produces the 26-carbon very long-chain fatty acids (VLCFA) from palmitate. Catalyzes the reduction of the 3-ketoacyl-CoA intermediate that is formed in each cycle of fatty acid elongation. VLCFAs serve as precursors for ceramide and sphingolipids. The polypeptide is Very-long-chain 3-oxoacyl-CoA reductase (Lodderomyces elongisporus (strain ATCC 11503 / CBS 2605 / JCM 1781 / NBRC 1676 / NRRL YB-4239) (Yeast)).